The sequence spans 346 residues: Zinc-type alcohol dehydrogenase-like protein C1773.06c (346 aa).

The protein belongs to the zinc-containing alcohol dehydrogenase family. Quinone oxidoreductase subfamily.

The protein resides in the cytoplasm. This chain is Zinc-type alcohol dehydrogenase-like protein C1773.06c, found in Schizosaccharomyces pombe (strain 972 / ATCC 24843) (Fission yeast).